A 1008-amino-acid polypeptide reads, in one-letter code: Pheromone-regulated membrane protein 10 (1008 aa).

3 disordered regions span residues 1-273 (MSQS…TFLG), 342-384 (KLPE…FYTP), and 477-506 (KNDF…TQDE). The span at 70–85 (DTIISNASTTNNSSSD) shows a compositional bias: low complexity. Positions 95–111 (GENSNLPNFNFSANQVH) are enriched in polar residues. 2 stretches are compositionally biased toward acidic residues: residues 116–132 (ANED…EDTF) and 143–161 (GSDE…EDKE). Over residues 162–186 (EVVNEKEEIADDLHSKSSKTSRESK) the composition is skewed to basic and acidic residues. Positions 188-204 (FNAGTKNSRRSLNSLQR) are enriched in polar residues. Residues 205-214 (NETDVTDQLK) show a composition bias toward basic and acidic residues. A compositionally biased stretch (low complexity) spans 215-225 (RTTSTTSSSKR). Over residues 226-239 (SNSDKRTGFKDILR) the composition is skewed to basic and acidic residues. Residues 346-364 (GTSSDQQLDYSDTSASNLI) show a composition bias toward polar residues. A compositionally biased stretch (basic residues) spans 483-498 (GPKRMANKIPGRKHGA). Helical transmembrane passes span 683–703 (SPWL…PFAF), 707–727 (WYDV…QFFV), 736–756 (SVFE…IGSI), 762–782 (FCFS…YIIL), 800–820 (MFYA…GASL), 838–858 (IKQD…LGLI), 866–886 (LPIM…AGKH), 892–912 (VTEF…NLYS), 917–937 (GMAV…GIAS), and 978–998 (VKVS…VYPF).

The protein belongs to the ThrE exporter (TC 2.A.79) family.

It localises to the membrane. The chain is Pheromone-regulated membrane protein 10 from Debaryomyces hansenii (strain ATCC 36239 / CBS 767 / BCRC 21394 / JCM 1990 / NBRC 0083 / IGC 2968) (Yeast).